The primary structure comprises 326 residues: ATP synthase gamma chain (326 aa).

This sequence belongs to the ATPase gamma chain family. F-type ATPases have 2 components, CF(1) - the catalytic core - and CF(0) - the membrane proton channel. CF(1) has five subunits: alpha(3), beta(3), gamma(1), delta(1), epsilon(1). CF(0) has three main subunits: a, b and c.

The protein localises to the cell membrane. Its function is as follows. Produces ATP from ADP in the presence of a proton gradient across the membrane. The gamma chain is believed to be important in regulating ATPase activity and the flow of protons through the CF(0) complex. The polypeptide is ATP synthase gamma chain (Corynebacterium efficiens (strain DSM 44549 / YS-314 / AJ 12310 / JCM 11189 / NBRC 100395)).